The primary structure comprises 587 residues: Pectinesterase 2 (587 aa).

An N-terminal signal peptide occupies residues 1–40 (MAPIKEFISKFSDFKNNKKLILSSAAIALLLLASIVGIAA). 2 N-linked (GlcNAc...) asparagine glycosylation sites follow: Asn99 and Asn218. Residues Thr351 and Gln381 each contribute to the substrate site. Asp404 acts as the Proton donor in catalysis. Residues Cys418 and Cys438 are joined by a disulfide bond. Asp425 acts as the Nucleophile in catalysis. Residues Arg493 and Trp495 each contribute to the substrate site.

It in the N-terminal section; belongs to the PMEI family. This sequence in the C-terminal section; belongs to the pectinesterase family. Expressed in flower buds.

The protein localises to the secreted. Its subcellular location is the cell wall. It carries out the reaction [(1-&gt;4)-alpha-D-galacturonosyl methyl ester](n) + n H2O = [(1-&gt;4)-alpha-D-galacturonosyl](n) + n methanol + n H(+). The protein operates within glycan metabolism; pectin degradation; 2-dehydro-3-deoxy-D-gluconate from pectin: step 1/5. Its function is as follows. Acts in the modification of cell walls via demethylesterification of cell wall pectin. The chain is Pectinesterase 2 (PME2) from Arabidopsis thaliana (Mouse-ear cress).